The following is a 343-amino-acid chain: ATP phosphoribosyltransferase regulatory subunit (343 aa).

The segment at 324 to 343 (RANGRAKRPARPRRSPPRPR) is disordered. Residues 327-343 (GRAKRPARPRRSPPRPR) are compositionally biased toward basic residues.

It belongs to the class-II aminoacyl-tRNA synthetase family. HisZ subfamily. As to quaternary structure, heteromultimer composed of HisG and HisZ subunits.

It localises to the cytoplasm. The protein operates within amino-acid biosynthesis; L-histidine biosynthesis; L-histidine from 5-phospho-alpha-D-ribose 1-diphosphate: step 1/9. Required for the first step of histidine biosynthesis. May allow the feedback regulation of ATP phosphoribosyltransferase activity by histidine. This chain is ATP phosphoribosyltransferase regulatory subunit, found in Anaeromyxobacter sp. (strain Fw109-5).